The primary structure comprises 318 residues: D-alanine--D-alanine ligase (318 aa).

The 196-residue stretch at 116–311 folds into the ATP-grasp domain; sequence KQVWQSLGIP…FQQLVLAILA (196 aa). ATP is bound at residue 142-197; sequence STELGFPLIVKPAHEGSSIGMAKVNSAQELVAAWQDAAKYDSQVLVEQWIHGPEFT. 3 residues coordinate Mg(2+): aspartate 265, glutamate 278, and asparagine 280.

The protein belongs to the D-alanine--D-alanine ligase family. The cofactor is Mg(2+). Requires Mn(2+) as cofactor.

It localises to the cytoplasm. It catalyses the reaction 2 D-alanine + ATP = D-alanyl-D-alanine + ADP + phosphate + H(+). The protein operates within cell wall biogenesis; peptidoglycan biosynthesis. In terms of biological role, cell wall formation. This is D-alanine--D-alanine ligase from Pseudomonas putida (strain GB-1).